The following is a 418-amino-acid chain: Glutamyl-tRNA(Gln) amidotransferase subunit D (418 aa).

An Asparaginase/glutaminase domain is found at 74–405 (KNISILSTGG…KEAKELMSKN (332 aa)). Catalysis depends on residues T84, T160, D161, and K237.

Belongs to the asparaginase 1 family. GatD subfamily. Heterodimer of GatD and GatE.

It carries out the reaction L-glutamyl-tRNA(Gln) + L-glutamine + ATP + H2O = L-glutaminyl-tRNA(Gln) + L-glutamate + ADP + phosphate + H(+). Its function is as follows. Allows the formation of correctly charged Gln-tRNA(Gln) through the transamidation of misacylated Glu-tRNA(Gln) in organisms which lack glutaminyl-tRNA synthetase. The reaction takes place in the presence of glutamine and ATP through an activated gamma-phospho-Glu-tRNA(Gln). The GatDE system is specific for glutamate and does not act on aspartate. The protein is Glutamyl-tRNA(Gln) amidotransferase subunit D of Methanococcus maripaludis (strain DSM 14266 / JCM 13030 / NBRC 101832 / S2 / LL).